A 415-amino-acid chain; its full sequence is NAD-dependent protein deacetylase hst4 (415 aa).

A disordered region spans residues 1-26; it reads MKVEEHVPLIQESRKRKCQSSENASK. Residues 40–337 enclose the Deacetylase sirtuin-type domain; that stretch reads TGNENVDLSP…RRLKPLLDAP (298 aa). NAD(+)-binding positions include 65-84 and 153-156; these read GAGI…EGLF and QNID. His184 acts as the Proton acceptor in catalysis. Zn(2+) contacts are provided by Cys192, Cys195, Cys214, and Cys217. Residues 273–275, 303–305, and Leu323 each bind NAD(+); these read GTS and NYD.

The protein belongs to the sirtuin family. Class I subfamily. It depends on Zn(2+) as a cofactor.

It is found in the nucleus. Its subcellular location is the nucleolus. It catalyses the reaction N(6)-acetyl-L-lysyl-[protein] + NAD(+) + H2O = 2''-O-acetyl-ADP-D-ribose + nicotinamide + L-lysyl-[protein]. NAD-dependent histone deacetylase, which contributes to both telomeric and centromeric silencing, proper cell cycle progression, DNA damage control, recombination, and genomic maintenance. The chain is NAD-dependent protein deacetylase hst4 (hst4) from Schizosaccharomyces pombe (strain 972 / ATCC 24843) (Fission yeast).